Reading from the N-terminus, the 103-residue chain is Ig kappa-b5 chain C region (103 aa).

An Ig-like domain is found at 5–99; sequence PTVLIFPPAP…GAGSVVQSFS (95 aa). Cysteines 26 and 85 form a disulfide.

This is Ig kappa-b5 chain C region from Oryctolagus cuniculus (Rabbit).